The primary structure comprises 230 residues: U2 small nuclear ribonucleoprotein A' (230 aa).

3 LRR repeats span residues 19–40 (KDRE…PFFP), 41–62 (RLRM…LANS), and 65–86 (GLTT…DPLR). The 39-residue stretch at 99–137 (NPVTRKEYYRLWIIWRIPSVRFLDYQKVKDAERAKAAEL) folds into the LRRCT domain. The interval 211 to 230 (GRIPGGALDGAGNDGDQMQL) is disordered. Gly residues predominate over residues 213-223 (IPGGALDGAGN).

It belongs to the U2 small nuclear ribonucleoprotein A family. Associated with the spliceosome.

The protein localises to the nucleus. Its function is as follows. Involved in pre-mRNA splicing. The sequence is that of U2 small nuclear ribonucleoprotein A' (lea1) from Emericella nidulans (strain FGSC A4 / ATCC 38163 / CBS 112.46 / NRRL 194 / M139) (Aspergillus nidulans).